The sequence spans 312 residues: Adenylyl-sulfate kinase, chloroplastic (312 aa).

142–149 (GLSGSGKS) serves as a coordination point for ATP. The active-site Phosphoserine intermediate is the Ser-216.

It belongs to the APS kinase family.

It localises to the plastid. The protein resides in the chloroplast. It carries out the reaction adenosine 5'-phosphosulfate + ATP = 3'-phosphoadenylyl sulfate + ADP + H(+). It participates in sulfur metabolism; hydrogen sulfide biosynthesis; sulfite from sulfate: step 2/3. Functionally, catalyzes the synthesis of activated sulfate. The sequence is that of Adenylyl-sulfate kinase, chloroplastic (AKN) from Catharanthus roseus (Madagascar periwinkle).